The chain runs to 57 residues: MKPAVDEMFPEGAGPYVDLDEAGGSTGLLMDLAANEKAVHADFFNDFEDLFDDDDIQ.

Thr-26 is modified (phosphothreonine).

This sequence belongs to the CSN9 family. In terms of assembly, component of the CSN complex, composed of COPS1/GPS1, COPS2, COPS3, COPS4, COPS5, COPS6, COPS7 (COPS7A or COPS7B), COPS8 and COPS9. In the complex, it interacts directly with COPS3, COPS5 and COPS6.

It localises to the nucleus. Its subcellular location is the cytoplasm. It is found in the nucleoplasm. Component of the COP9 signalosome complex (CSN), a complex involved in various cellular and developmental processes. The CSN complex is an essential regulator of the ubiquitin (Ubl) conjugation pathway by mediating the deneddylation of the cullin subunits of SCF-type E3 ligase complexes, leading to decrease the Ubl ligase activity of SCF-type complexes such as SCF, CSA or DDB2. The complex is also involved in phosphorylation of p53/TP53, c-jun/JUN, IkappaBalpha/NFKBIA, ITPK1 and IRF8/ICSBP, possibly via its association with CK2 and PKD kinases. CSN-dependent phosphorylation of TP53 and JUN promotes and protects degradation by the Ubl system, respectively. Plays a role in cell proliferation. This Bos taurus (Bovine) protein is COP9 signalosome complex subunit 9.